The chain runs to 356 residues: Vanillin synthase, chloroplastic (356 aa).

Asn-122 is a glycosylation site (N-linked (GlcNAc...) asparagine). Cystine bridges form between Cys-159/Cys-202 and Cys-193/Cys-235. Cys-162 is a catalytic residue. Asn-251 carries an N-linked (GlcNAc...) asparagine glycan. An intrachain disulfide couples Cys-293 to Cys-343. Catalysis depends on residues His-302 and Asn-322.

It belongs to the peptidase C1 family. As to quaternary structure, forms homodimers, homotrimers and homotetramers. As to expression, accumulates in the inner part of vanilla pods (at protein level). Expressed in single cells located a few cell layers from the inner epidermis.

Its subcellular location is the plastid. The protein localises to the chloroplast. The catalysed reaction is (E)-ferulate + H2O = vanillin + acetate. It catalyses the reaction 4-O-beta-D-glucosyl-trans-ferulate + H2O = 4-O-beta-D-glucosyl-vanillin + acetate. Its pathway is aromatic compound metabolism; phenylpropanoid biosynthesis. Involved in the biosynthesis of vanillin (4-hydroxy-3-methoxy-benzaldehyde) and derivative natural products, key components of vanilla pods flavor. Catalyzes the double carbon bond cleavage of ferulic acid to vanillin and of their respective glucosides via a coupled non-oxidative hydratase/lyase reaction. Inactive toward p-coumaric acid, caffeic acid and their glucosides derivatives. The polypeptide is Vanillin synthase, chloroplastic (Vanilla planifolia (Vanilla)).